Reading from the N-terminus, the 500-residue chain is Protein nucleotidyltransferase YdiU (500 aa).

Gly-96, Gly-98, Arg-99, Lys-119, Asp-131, Gly-132, Arg-182, and Arg-189 together coordinate ATP. The active-site Proton acceptor is the Asp-258. 2 residues coordinate Mg(2+): Asn-259 and Asp-268. Asp-268 contacts ATP.

It belongs to the SELO family. Mg(2+) serves as cofactor. It depends on Mn(2+) as a cofactor.

The catalysed reaction is L-seryl-[protein] + ATP = 3-O-(5'-adenylyl)-L-seryl-[protein] + diphosphate. It carries out the reaction L-threonyl-[protein] + ATP = 3-O-(5'-adenylyl)-L-threonyl-[protein] + diphosphate. It catalyses the reaction L-tyrosyl-[protein] + ATP = O-(5'-adenylyl)-L-tyrosyl-[protein] + diphosphate. The enzyme catalyses L-histidyl-[protein] + UTP = N(tele)-(5'-uridylyl)-L-histidyl-[protein] + diphosphate. The catalysed reaction is L-seryl-[protein] + UTP = O-(5'-uridylyl)-L-seryl-[protein] + diphosphate. It carries out the reaction L-tyrosyl-[protein] + UTP = O-(5'-uridylyl)-L-tyrosyl-[protein] + diphosphate. Its function is as follows. Nucleotidyltransferase involved in the post-translational modification of proteins. It can catalyze the addition of adenosine monophosphate (AMP) or uridine monophosphate (UMP) to a protein, resulting in modifications known as AMPylation and UMPylation. In Rhizobium etli (strain CIAT 652), this protein is Protein nucleotidyltransferase YdiU.